A 202-amino-acid polypeptide reads, in one-letter code: Helix-loop-helix protein 10 (202 aa).

Disordered regions lie at residues M1–L26 and Q83–D112. Over residues S17–L26 the composition is skewed to polar residues. The interval T121 to V134 is basic motif. In terms of domain architecture, bHLH spans T121 to L172. The helix-loop-helix motif stretch occupies residues Q135 to L172.

In terms of assembly, heterodimer with hlh-2. Expressed in intestine, neurons in head, body and tail, and in body hypodermis, and vulva. Expressed in neurons in the male-specific genital sensilla (simple sense organs) known as rays.

Its subcellular location is the nucleus. The protein resides in the cytoplasm. Probable transcription factor which binds the E box motif 5'-CA[TC][AG]TG-3'. The chain is Helix-loop-helix protein 10 from Caenorhabditis elegans.